The following is a 222-amino-acid chain: GTP cyclohydrolase 1 (222 aa).

Zn(2+) contacts are provided by Cys-111, His-114, and Cys-182.

It belongs to the GTP cyclohydrolase I family. As to quaternary structure, toroid-shaped homodecamer, composed of two pentamers of five dimers.

The enzyme catalyses GTP + H2O = 7,8-dihydroneopterin 3'-triphosphate + formate + H(+). It functions in the pathway cofactor biosynthesis; 7,8-dihydroneopterin triphosphate biosynthesis; 7,8-dihydroneopterin triphosphate from GTP: step 1/1. In Citrobacter koseri (strain ATCC BAA-895 / CDC 4225-83 / SGSC4696), this protein is GTP cyclohydrolase 1.